A 112-amino-acid polypeptide reads, in one-letter code: uncharacterized protein (112 aa).

The protein resides in the plastid. It is found in the chloroplast. This is an uncharacterized protein from Chlamydomonas reinhardtii (Chlamydomonas smithii).